A 367-amino-acid chain; its full sequence is Putative methylthioribose-1-phosphate isomerase (367 aa).

Residues 65–67 (RGA), Arg106, and Gln218 contribute to the substrate site. The Proton donor role is filled by Asp259. 269-270 (NK) is a binding site for substrate.

Belongs to the eIF-2B alpha/beta/delta subunits family. MtnA subfamily.

The enzyme catalyses 5-(methylsulfanyl)-alpha-D-ribose 1-phosphate = 5-(methylsulfanyl)-D-ribulose 1-phosphate. In terms of biological role, catalyzes the interconversion of methylthioribose-1-phosphate (MTR-1-P) into methylthioribulose-1-phosphate (MTRu-1-P). The protein is Putative methylthioribose-1-phosphate isomerase of Sulfolobus acidocaldarius (strain ATCC 33909 / DSM 639 / JCM 8929 / NBRC 15157 / NCIMB 11770).